The following is a 29-amino-acid chain: Cyclotide mobo-B (29 aa).

A cross-link (cyclopeptide (Gly-Asn)) is located at residues glycine 1–asparagine 29. Disulfide bonds link cysteine 5/cysteine 19, cysteine 9/cysteine 21, and cysteine 14/cysteine 26.

This sequence belongs to the cyclotide family. Post-translationally, this is a cyclic peptide.

Functionally, probably participates in a plant defense mechanism. The protein is Cyclotide mobo-B of Melicytus obovatus (Hymenanthera obovata).